Reading from the N-terminus, the 158-residue chain is Transcription elongation factor GreA (158 aa).

Residues 46–66 (AEYEAAKERQGFIEGRISELE) adopt a coiled-coil conformation.

It belongs to the GreA/GreB family.

In terms of biological role, necessary for efficient RNA polymerase transcription elongation past template-encoded arresting sites. The arresting sites in DNA have the property of trapping a certain fraction of elongating RNA polymerases that pass through, resulting in locked ternary complexes. Cleavage of the nascent transcript by cleavage factors such as GreA or GreB allows the resumption of elongation from the new 3'terminus. GreA releases sequences of 2 to 3 nucleotides. This Neisseria meningitidis serogroup B (strain ATCC BAA-335 / MC58) protein is Transcription elongation factor GreA.